Consider the following 334-residue polypeptide: Glyceraldehyde-3-phosphate dehydrogenase (334 aa).

Residues 11-12 (RI), Asp-33, and Ser-119 contribute to the NAD(+) site. D-glyceraldehyde 3-phosphate-binding positions include 149-151 (SCT) and Thr-180. The active-site Nucleophile is the Cys-150. Asn-181 lines the NAD(+) pocket. D-glyceraldehyde 3-phosphate-binding positions include Arg-197, 210–211 (TG), and Arg-233. Asn-314 contributes to the NAD(+) binding site.

The protein belongs to the glyceraldehyde-3-phosphate dehydrogenase family. Homotetramer.

It is found in the cytoplasm. It catalyses the reaction D-glyceraldehyde 3-phosphate + phosphate + NAD(+) = (2R)-3-phospho-glyceroyl phosphate + NADH + H(+). Its pathway is carbohydrate degradation; glycolysis; pyruvate from D-glyceraldehyde 3-phosphate: step 1/5. Its function is as follows. Catalyzes the oxidative phosphorylation of glyceraldehyde 3-phosphate (G3P) to 1,3-bisphosphoglycerate (BPG) using the cofactor NAD. The first reaction step involves the formation of a hemiacetal intermediate between G3P and a cysteine residue, and this hemiacetal intermediate is then oxidized to a thioester, with concomitant reduction of NAD to NADH. The reduced NADH is then exchanged with the second NAD, and the thioester is attacked by a nucleophilic inorganic phosphate to produce BPG. The polypeptide is Glyceraldehyde-3-phosphate dehydrogenase (gap) (Clostridium pasteurianum).